We begin with the raw amino-acid sequence, 93 residues long: Protein NONRESPONDING TO OXYLIPINS 2, mitochondrial (93 aa).

The transit peptide at 1–27 (MASRCRSLSKPAFSAFRSAMNKPSIRP) directs the protein to the mitochondrion.

Expressed in cotyledons, roots and flowers.

The protein localises to the mitochondrion. In terms of biological role, essential for mitochondrial morphology, functionality and distribution. Contributes to 9-lipoxygenase (9-LOX)-derived oxylipin synthesis, but not to brassinosteroids (BRs) signaling. Required for waving-inducing oxylipin 9-hydroxyoctadecatrienoic acid and derivatives (e.g. 9-HOT, 2-HOE, 13-HOT, 13-HOD, 13-KOD, 12,13-KHOD, 9-HOT, 9-HOD, 9-KOT, 9-KOD and 9,10-KHOE)-mediated root development regulation, including callose deposition, root waving and lateral roots formation. Involved in basal plant defense toward pathogenic bacteria (e.g. Pseudomonas syringae pv tomato), both in compatible (e.g. Pst DC3000) and incompatible (e.g. Pst DC3000 avrRPM1) interactions, as well as against obligate biotrophic pathogenic fungi (e.g. Golovinomyces cichoracearum), probably via the promotion of callose deposition in the cell wall. Confers sensitivity to the herbicide isoxaben, a herbicide inhibiting cellulose synthesis and altering the cell wall. The sequence is that of Protein NONRESPONDING TO OXYLIPINS 2, mitochondrial from Arabidopsis thaliana (Mouse-ear cress).